We begin with the raw amino-acid sequence, 97 residues long: uncharacterized protein (97 aa).

Positions methionine 1 to glycine 16 are cleaved as a signal peptide. Residue cysteine 17 is the site of N-palmitoyl cysteine attachment. The S-diacylglycerol cysteine moiety is linked to residue cysteine 17.

It is found in the cell membrane. This is an uncharacterized protein from Bacillus subtilis (strain 168).